Here is a 202-residue protein sequence, read N- to C-terminus: GTP cyclohydrolase 1 (202 aa).

Zn(2+) contacts are provided by Cys90, His93, and Cys163.

It belongs to the GTP cyclohydrolase I family. Toroid-shaped homodecamer, composed of two pentamers of five dimers.

It carries out the reaction GTP + H2O = 7,8-dihydroneopterin 3'-triphosphate + formate + H(+). It functions in the pathway cofactor biosynthesis; 7,8-dihydroneopterin triphosphate biosynthesis; 7,8-dihydroneopterin triphosphate from GTP: step 1/1. In Mycolicibacterium vanbaalenii (strain DSM 7251 / JCM 13017 / BCRC 16820 / KCTC 9966 / NRRL B-24157 / PYR-1) (Mycobacterium vanbaalenii), this protein is GTP cyclohydrolase 1.